Reading from the N-terminus, the 419-residue chain is Tyrosine--tRNA ligase 2 (419 aa).

L-tyrosine is bound at residue tyrosine 34. The short motif at 39-48 (PTGDSMHIGH) is the 'HIGH' region element. Tyrosine 168 and glutamine 172 together coordinate L-tyrosine. The 'KMSKS' region signature appears at 230–234 (KFGKS). Lysine 233 contributes to the ATP binding site. An S4 RNA-binding domain is found at 352–418 (KNIVEWLVDL…GKKNYSLVKL (67 aa)).

Belongs to the class-I aminoacyl-tRNA synthetase family. TyrS type 1 subfamily. In terms of assembly, homodimer.

The protein localises to the cytoplasm. The catalysed reaction is tRNA(Tyr) + L-tyrosine + ATP = L-tyrosyl-tRNA(Tyr) + AMP + diphosphate + H(+). Catalyzes the attachment of tyrosine to tRNA(Tyr) in a two-step reaction: tyrosine is first activated by ATP to form Tyr-AMP and then transferred to the acceptor end of tRNA(Tyr). The sequence is that of Tyrosine--tRNA ligase 2 from Bacillus thuringiensis subsp. konkukian (strain 97-27).